We begin with the raw amino-acid sequence, 223 residues long: Ribose-5-phosphate isomerase A (223 aa).

Substrate contacts are provided by residues 28–31, 81–84, and 94–97; these read TGST, DGAD, and KGGG. The Proton acceptor role is filled by E103. Position 121 (K121) interacts with substrate.

This sequence belongs to the ribose 5-phosphate isomerase family. In terms of assembly, homodimer.

It carries out the reaction aldehydo-D-ribose 5-phosphate = D-ribulose 5-phosphate. The protein operates within carbohydrate degradation; pentose phosphate pathway; D-ribose 5-phosphate from D-ribulose 5-phosphate (non-oxidative stage): step 1/1. Its function is as follows. Catalyzes the reversible conversion of ribose-5-phosphate to ribulose 5-phosphate. The protein is Ribose-5-phosphate isomerase A of Ruthia magnifica subsp. Calyptogena magnifica.